The sequence spans 153 residues: ATP synthase subunit b' (153 aa).

Residues 20–40 traverse the membrane as a helical segment; that stretch reads TLPLMAVQVVLLTFILNALFF.

It belongs to the ATPase B chain family. F-type ATPases have 2 components, F(1) - the catalytic core - and F(0) - the membrane proton channel. F(1) has five subunits: alpha(3), beta(3), gamma(1), delta(1), epsilon(1). F(0) has four main subunits: a(1), b(1), b'(1) and c(10-14). The alpha and beta chains form an alternating ring which encloses part of the gamma chain. F(1) is attached to F(0) by a central stalk formed by the gamma and epsilon chains, while a peripheral stalk is formed by the delta, b and b' chains.

The protein resides in the cellular thylakoid membrane. Its function is as follows. F(1)F(0) ATP synthase produces ATP from ADP in the presence of a proton or sodium gradient. F-type ATPases consist of two structural domains, F(1) containing the extramembraneous catalytic core and F(0) containing the membrane proton channel, linked together by a central stalk and a peripheral stalk. During catalysis, ATP synthesis in the catalytic domain of F(1) is coupled via a rotary mechanism of the central stalk subunits to proton translocation. In terms of biological role, component of the F(0) channel, it forms part of the peripheral stalk, linking F(1) to F(0). The b'-subunit is a diverged and duplicated form of b found in plants and photosynthetic bacteria. The chain is ATP synthase subunit b' from Prochlorococcus marinus (strain NATL2A).